We begin with the raw amino-acid sequence, 227 residues long: E3 ubiquitin-protein ligase ZNRF1 (227 aa).

The segment at 1–42 (MGGKQSTAARSRGPFPGVSTDDSAVPPPGGAPHFGHYRTGGG) is disordered. The N-myristoyl glycine moiety is linked to residue G2. The tract at residues 2-10 (GGKQSTAAR) is required for endosomal and lysosomal localization and myristoylation. Residues S50, S52, and S53 each carry the phosphoserine modification. A disordered region spans residues 68–105 (PFGLYTPASRGTGDSERAPGGGGSASDSTYAHGNGYQE). A Phosphotyrosine; by SRC modification is found at Y103. At S123 the chain carries Phosphoserine. Residues 184 to 225 (CVICLEELLQGDTIARLPCLCIYHKSCIDSWFEVNRSCPEHP) form an RING-type; atypical zinc finger.

In terms of assembly, interacts with AKT1, GLUL and TUBB2A. Interacts with ZNRF2. Interacts (via its RING domain) with UBE2N. Interacts (when phosphorylated) with YWHAE. N-myristoylation targets ZNRF1 to intracellular membranes. In terms of processing, phosphorylated by SRC at Tyr-103; leading to 'Lys-63'-linked ubiquitination of TLR3, lysosomal trafficking and degradation. In terms of tissue distribution, expressed primarily in the nervous system, with expression higher in developing brain relative to adult. Expressed at low levels in testis and thymus.

The protein localises to the endosome. The protein resides in the lysosome. It is found in the membrane. Its subcellular location is the cytoplasmic vesicle. It localises to the secretory vesicle. The protein localises to the synaptic vesicle membrane. The catalysed reaction is S-ubiquitinyl-[E2 ubiquitin-conjugating enzyme]-L-cysteine + [acceptor protein]-L-lysine = [E2 ubiquitin-conjugating enzyme]-L-cysteine + N(6)-ubiquitinyl-[acceptor protein]-L-lysine.. Its pathway is protein modification; protein ubiquitination. Functionally, E3 ubiquitin-protein ligase that plays a role in different processes including cell differentiation, receptor recycling or regulation of inflammation. Mediates the ubiquitination of AKT1 and GLUL, thereby playing a role in neuron cells differentiation. Plays a role in the establishment and maintenance of neuronal transmission and plasticity. Regulates Schwann cells differentiation by mediating ubiquitination of GLUL. Promotes neurodegeneration by mediating 'Lys-48'-linked polyubiquitination and subsequent degradation of AKT1 in axons: degradation of AKT1 prevents AKT1-mediated phosphorylation of GSK3B, leading to GSK3B activation and phosphorylation of DPYSL2/CRMP2 followed by destabilization of microtubule assembly in axons. Ubiquitinates the Na(+)/K(+) ATPase alpha-1 subunit/ATP1A1 and thereby influences its endocytosis and/or degradation. Controls ligand-induced EGFR signaling via mediating receptor ubiquitination and recruitment of the ESCRT machinery. Acts as a negative feedback mechanism controlling TLR3 trafficking by mediating TLR3 'Lys-63'-linked polyubiquitination to reduce type I IFN production. Modulates inflammation by promoting caveolin-1/CAV1 ubiquitination and degradation to regulate TLR4-activated immune response. The chain is E3 ubiquitin-protein ligase ZNRF1 (ZNRF1) from Homo sapiens (Human).